The chain runs to 397 residues: Lysophospholipid transporter LplT (397 aa).

The Periplasmic segment spans residues 1-17 (MSESVHTNTSLWSKGMK). Residues 18-38 (AVIVAQFLSAFGDNALLFATL) traverse the membrane as a helical segment. The Cytoplasmic segment spans residues 39–52 (ALLKAQFYPEWSQP). The helical transmembrane segment at 53-73 (ILQMVFVGAYILFAPFVGQVA) threads the bilayer. Residues 74-90 (DSFAKGRVMMFANGLKL) lie on the Periplasmic side of the membrane. The helical transmembrane segment at 91-111 (LGAASICFGINPFLGYTLVGV) threads the bilayer. Topologically, residues 112–144 (GAAAYSPAKYGILGELTTGSKLVKANGLMEAST) are cytoplasmic. A helical membrane pass occupies residues 145–165 (IAAILLGSVAGGVLADWHVLV). Position 166 (Ala166) is a topological domain, periplasmic. The helical transmembrane segment at 167–187 (LAACALAYGGAVVANIYIPKL) threads the bilayer. Over 188–226 (AAARPGQSWNLINMTRSFLNACTSLWCNGETRFSLVGTS) the chain is Cytoplasmic. The helical transmembrane segment at 227-247 (LFWGAGVTLRFLLVLWVPVAL) threads the bilayer. Residues 248-256 (GITDNATPT) lie on the Periplasmic side of the membrane. Residues 257-277 (YLNAMVAIGIVVGAGAAAKLV) form a helical membrane-spanning segment. At 278–280 (TLE) the chain is on the cytoplasmic side. A helical membrane pass occupies residues 281-301 (TVSRCMPAGILIGVVVLIFSL). The Periplasmic segment spans residues 302–304 (QHE). The chain crosses the membrane as a helical span at residues 305 to 325 (LLPAYALLMLIGVLGGFFVVP). The Cytoplasmic segment spans residues 326-343 (LNALLQERGKKSVGAGNA). The helical transmembrane segment at 344 to 364 (IAVQNLGENSAMLLMLGIYSL) threads the bilayer. The Periplasmic portion of the chain corresponds to 365–366 (AV). A helical membrane pass occupies residues 367–387 (MVGIPVVPIGIGFGALFALAI). Residues 388 to 397 (TALWIWQRRH) are Cytoplasmic-facing.

It belongs to the major facilitator superfamily. LplT (TC 2.A.1.42) family.

It is found in the cell inner membrane. Functionally, catalyzes the facilitated diffusion of 2-acyl-glycero-3-phosphoethanolamine (2-acyl-GPE) into the cell. The protein is Lysophospholipid transporter LplT of Shigella dysenteriae serotype 1 (strain Sd197).